Reading from the N-terminus, the 648-residue chain is SRSF protein kinase 1 (648 aa).

The segment at 1–57 (MERKVLALQARKKRTKAKKDKAQRKPETQHRGSAPHSESDIPEQEEEILGSDDDEQE) is disordered. Residues 10-22 (ARKKRTKAKKDKA) show a composition bias toward basic residues. Positions 40-57 (DIPEQEEEILGSDDDEQE) are enriched in acidic residues. Ser51 is modified (phosphoserine). In terms of domain architecture, Protein kinase spans 80–646 (YHVIRKLGWG…AAECLRHPWL (567 aa)). Residues 86–94 (LGWGHFSTV) and Lys109 contribute to the ATP site. The active-site Proton acceptor is Asp213. Disordered stretches follow at residues 238–354 (WQRS…APEI) and 395–464 (PSFL…DSKG). Residues 265–276 (KNKKKKLKKKQK) show a composition bias toward basic residues. Composition is skewed to basic and acidic residues over residues 277–288 (RQAELLEKRMQE) and 304–317 (NKQE…DRPL). Phosphoserine is present on residues Ser309, Ser311, and Ser333. Composition is skewed to polar residues over residues 333–343 (SNSIGQDQTLT) and 396–441 (SFLN…TQLE). Residue Thr448 is modified to Phosphothreonine. Ser450 bears the Phosphoserine mark. Ser548 is subject to Phosphoserine; by CK2.

Belongs to the protein kinase superfamily. CMGC Ser/Thr protein kinase family. Monomer. Found in a multisubunit complex containing seven proteins, named toposome, which separates entangled circular chromatin DNA during chromosome segregation. Interacts with HHV-1 ICP27 protein. Interacts with DNAJC8 and AHSA1/AHA1 and this mediates formation of a complex with the Hsp70 /Hsp90 machinery. Binds to IGF2BP1, SYNCRIP, HNRNPA2B1 and HNRNPC. Interacts with SAFB/SAFB1 and SAFB2 which inhibits its activity. It depends on Mg(2+) as a cofactor. Predominantly expressed in the testis but is also present at lower levels in heart, spleen, liver, brain, kidney, lung and skeletal muscle. Present in all germinal cells in the seminiferous tubules but not in mature spermatozoa.

The protein resides in the cytoplasm. It is found in the nucleus. It localises to the nucleoplasm. The protein localises to the nucleus matrix. Its subcellular location is the microsome. The protein resides in the nucleus speckle. It is found in the chromosome. It carries out the reaction L-seryl-[protein] + ATP = O-phospho-L-seryl-[protein] + ADP + H(+). The enzyme catalyses L-threonyl-[protein] + ATP = O-phospho-L-threonyl-[protein] + ADP + H(+). Activated by phosphorylation on Ser-51 and Ser-548. Its function is as follows. Serine/arginine-rich protein-specific kinase which specifically phosphorylates its substrates at serine residues located in regions rich in arginine/serine dipeptides, known as RS domains and is involved in the phosphorylation of SR splicing factors and the regulation of splicing. Plays a central role in the regulatory network for splicing, controlling the intranuclear distribution of splicing factors in interphase cells and the reorganization of nuclear speckles during mitosis. Can influence additional steps of mRNA maturation, as well as other cellular activities, such as chromatin reorganization in somatic and sperm cells and cell cycle progression. Phosphorylates SFRS2, ZRSR2, LBR and PRM1. Phosphorylates SRSF1 using a directional (C-terminal to N-terminal) and a dual-track mechanism incorporating both processive phosphorylation (in which the kinase stays attached to the substrate after each round of phosphorylation) and distributive phosphorylation steps (in which the kinase and substrate dissociate after each phosphorylation event). The RS domain of SRSF1 binds first to a docking groove in the large lobe of the kinase domain of SRPK1. This induces certain structural changes in SRPK1 and/or RRM2 domain of SRSF1, allowing RRM2 to bind the kinase and initiate phosphorylation. The cycles continue for several phosphorylation steps in a processive manner (steps 1-8) until the last few phosphorylation steps (approximately steps 9-12). During that time, a mechanical stress induces the unfolding of the beta-4 motif in RRM2, which then docks at the docking groove of SRPK1. This also signals RRM2 to begin to dissociate, which facilitates SRSF1 dissociation after phosphorylation is completed. Can mediate hepatitis B virus (HBV) core protein phosphorylation. It plays a negative role in the regulation of HBV replication through a mechanism not involving the phosphorylation of the core protein but by reducing the packaging efficiency of the pregenomic RNA (pgRNA) without affecting the formation of the viral core particles. Can induce splicing of exon 10 in MAPT/TAU. This chain is SRSF protein kinase 1, found in Mus musculus (Mouse).